The following is a 300-amino-acid chain: Protein SPEAR2 (300 aa).

The segment covering 1-11 has biased composition (polar residues); that stretch reads MCSNNNTSSGS. The segment at 1–64 is disordered; that stretch reads MCSNNNTSSG…PPLSSSPSLP (64 aa). The span at 25 to 38 shows a compositional bias: basic residues; it reads CRKKQKKDKVRRRG. The SPL signature appears at 37-45; it reads RGPGVAELE. Residues 43-54 show a composition bias toward basic and acidic residues; it reads ELEKIRLQEEYK. Residues 55–64 show a composition bias toward low complexity; the sequence is PPLSSSPSLP. Residues 294–300 carry the EAR motif; sequence IDLNLKL.

Homodimer and heterodimer with SPL and SPEARs. Interacts with SPL, SPEAR1, SPEAR3 and SPEAR4. In terms of tissue distribution, expressed in leaves.

In terms of biological role, adapter-like transcriptional repressor recruiting TPL/TPR corepressors to inhibit TCP transcription factors. May be involved in leaf development. In Arabidopsis thaliana (Mouse-ear cress), this protein is Protein SPEAR2.